Here is a 500-residue protein sequence, read N- to C-terminus: L-arabinose isomerase (500 aa).

4 residues coordinate Mn(2+): E306, E333, H350, and H450.

This sequence belongs to the arabinose isomerase family. As to quaternary structure, homohexamer. It depends on Mn(2+) as a cofactor.

The enzyme catalyses beta-L-arabinopyranose = L-ribulose. Its pathway is carbohydrate degradation; L-arabinose degradation via L-ribulose; D-xylulose 5-phosphate from L-arabinose (bacterial route): step 1/3. In terms of biological role, catalyzes the conversion of L-arabinose to L-ribulose. This Yersinia enterocolitica serotype O:8 / biotype 1B (strain NCTC 13174 / 8081) protein is L-arabinose isomerase.